Consider the following 388-residue polypeptide: Pre-mRNA-splicing factor cwf2 (388 aa).

Residues 43-63 (VKRKKQPARKQIETRPEYEME) are disordered. The segment at 111 to 138 (NPGSFFCLYFARGMCSEGSKCEYLHRLP) adopts a C3H1-type zinc-finger fold. Residues 174 to 248 (YTLYVGGITP…ECLNVRWATT (75 aa)) form the RRM domain. The disordered stretch occupies residues 331–352 (PNKSQSEEGSNDDHKSVTTTES).

The protein belongs to the RRM CWC2 family. In terms of assembly, belongs to the 40S cdc5-associated complex (or cwf complex), a spliceosome sub-complex reminiscent of a late-stage spliceosome composed of the U2, U5 and U6 snRNAs and at least brr2, cdc5, cwf2/prp3, cwf3/syf1, cwf4/syf3, cwf5/ecm2, spp42/cwf6, cwf7/spf27, cwf8, cwf9, cwf10, cwf11, cwf12, prp45/cwf13, cwf14, cwf15, cwf16, cwf17, cwf18, cwf19, cwf20, cwf21, cwf22, cwf23, cwf24, cwf25, cwf26, cyp7/cwf27, cwf28, cwf29/ist3, lea1, msl1, prp5/cwf1, prp10, prp12/sap130, prp17, prp22, sap61, sap62, sap114, sap145, slu7, smb1, smd1, smd3, smf1, smg1 and syf2.

The protein resides in the nucleus. Involved in the first step of pre-mRNA splicing. Required for cell growth and cell cycle control. Plays a role in the levels of the U1, U4, U5 and U6 snRNAs and the maintenance of the U4/U6 snRNA complex. May provide the link between the 'nineteen complex' NTC spliceosome protein complex and the spliceosome through the U6 snRNA. Associates predominantly with U6 snRNAs in assembled active spliceosomes. Binds directly to the internal stem-loop (ISL) domain of the U6 snRNA and to the pre-mRNA intron near the 5' splice site during the activation and catalytic phases of the spliceosome cycle. Involved in pre-mRNA splicing. The protein is Pre-mRNA-splicing factor cwf2 (cwf2) of Schizosaccharomyces pombe (strain 972 / ATCC 24843) (Fission yeast).